A 407-amino-acid chain; its full sequence is Probable tRNA sulfurtransferase (407 aa).

Residues 61–165 (NEITYRLSKI…LDAIYMYEEV (105 aa)) enclose the THUMP domain. ATP-binding positions include 183–184 (ML), 208–209 (HF), Arg-265, Gly-287, and Gln-296.

Belongs to the ThiI family.

Its subcellular location is the cytoplasm. The catalysed reaction is [ThiI sulfur-carrier protein]-S-sulfanyl-L-cysteine + a uridine in tRNA + 2 reduced [2Fe-2S]-[ferredoxin] + ATP + H(+) = [ThiI sulfur-carrier protein]-L-cysteine + a 4-thiouridine in tRNA + 2 oxidized [2Fe-2S]-[ferredoxin] + AMP + diphosphate. The enzyme catalyses [ThiS sulfur-carrier protein]-C-terminal Gly-Gly-AMP + S-sulfanyl-L-cysteinyl-[cysteine desulfurase] + AH2 = [ThiS sulfur-carrier protein]-C-terminal-Gly-aminoethanethioate + L-cysteinyl-[cysteine desulfurase] + A + AMP + 2 H(+). Its pathway is cofactor biosynthesis; thiamine diphosphate biosynthesis. Catalyzes the ATP-dependent transfer of a sulfur to tRNA to produce 4-thiouridine in position 8 of tRNAs, which functions as a near-UV photosensor. Also catalyzes the transfer of sulfur to the sulfur carrier protein ThiS, forming ThiS-thiocarboxylate. This is a step in the synthesis of thiazole, in the thiamine biosynthesis pathway. The sulfur is donated as persulfide by IscS. This chain is Probable tRNA sulfurtransferase, found in Staphylococcus aureus (strain NCTC 8325 / PS 47).